The following is a 584-amino-acid chain: Alpha-glucosidase MAL32 (584 aa).

Asp214 functions as the Nucleophile in the catalytic mechanism. Glu276 (proton donor) is an active-site residue.

Belongs to the glycosyl hydrolase 13 family.

It catalyses the reaction Hydrolysis of terminal, non-reducing (1-&gt;4)-linked alpha-D-glucose residues with release of alpha-D-glucose.. The chain is Alpha-glucosidase MAL32 (MAL32) from Saccharomyces cerevisiae (strain ATCC 204508 / S288c) (Baker's yeast).